We begin with the raw amino-acid sequence, 308 residues long: Probable inositol oxygenase (308 aa).

Substrate is bound by residues Arg49 and 106-108 (DDS). 3 residues coordinate Fe cation: His119, His144, and Asp145. Substrate contacts are provided by residues Lys148 and 165 to 166 (GD). Positions 217, 243, and 276 each coordinate Fe cation. 243–244 (HS) is a binding site for substrate.

The protein belongs to the myo-inositol oxygenase family. Requires Fe cation as cofactor.

The protein localises to the cytoplasm. It catalyses the reaction myo-inositol + O2 = D-glucuronate + H2O + H(+). It participates in polyol metabolism; myo-inositol degradation into D-glucuronate; D-glucuronate from myo-inositol: step 1/1. In terms of biological role, involved in the biosynthesis of UDP-glucuronic acid (UDP-GlcA), providing nucleotide sugars for cell-wall polymers. May be also involved in plant ascorbate biosynthesis. The sequence is that of Probable inositol oxygenase from Oryza sativa subsp. japonica (Rice).